The primary structure comprises 296 residues: Ribosomal RNA small subunit methyltransferase A (296 aa).

S-adenosyl-L-methionine contacts are provided by Asn-31, Leu-33, Gly-58, Glu-79, Asp-104, and Asn-129.

The protein belongs to the class I-like SAM-binding methyltransferase superfamily. rRNA adenine N(6)-methyltransferase family. RsmA subfamily.

It is found in the cytoplasm. The enzyme catalyses adenosine(1518)/adenosine(1519) in 16S rRNA + 4 S-adenosyl-L-methionine = N(6)-dimethyladenosine(1518)/N(6)-dimethyladenosine(1519) in 16S rRNA + 4 S-adenosyl-L-homocysteine + 4 H(+). In terms of biological role, specifically dimethylates two adjacent adenosines (A1518 and A1519) in the loop of a conserved hairpin near the 3'-end of 16S rRNA in the 30S particle. May play a critical role in biogenesis of 30S subunits. In Shouchella clausii (strain KSM-K16) (Alkalihalobacillus clausii), this protein is Ribosomal RNA small subunit methyltransferase A.